The chain runs to 185 residues: Ribosome-recycling factor (185 aa).

Belongs to the RRF family.

It is found in the cytoplasm. In terms of biological role, responsible for the release of ribosomes from messenger RNA at the termination of protein biosynthesis. May increase the efficiency of translation by recycling ribosomes from one round of translation to another. The protein is Ribosome-recycling factor of Photobacterium profundum (strain SS9).